A 527-amino-acid chain; its full sequence is Bifunctional purine biosynthesis protein PurH (527 aa).

The MGS-like domain occupies 1–149 (MTADLLPVRR…KNFARVAVAT (149 aa)).

The protein belongs to the PurH family.

The catalysed reaction is (6R)-10-formyltetrahydrofolate + 5-amino-1-(5-phospho-beta-D-ribosyl)imidazole-4-carboxamide = 5-formamido-1-(5-phospho-D-ribosyl)imidazole-4-carboxamide + (6S)-5,6,7,8-tetrahydrofolate. The enzyme catalyses IMP + H2O = 5-formamido-1-(5-phospho-D-ribosyl)imidazole-4-carboxamide. It participates in purine metabolism; IMP biosynthesis via de novo pathway; 5-formamido-1-(5-phospho-D-ribosyl)imidazole-4-carboxamide from 5-amino-1-(5-phospho-D-ribosyl)imidazole-4-carboxamide (10-formyl THF route): step 1/1. Its pathway is purine metabolism; IMP biosynthesis via de novo pathway; IMP from 5-formamido-1-(5-phospho-D-ribosyl)imidazole-4-carboxamide: step 1/1. The sequence is that of Bifunctional purine biosynthesis protein PurH from Stenotrophomonas maltophilia (strain K279a).